Reading from the N-terminus, the 128-residue chain is Nanos homolog 1 (128 aa).

Positions 7 to 23 are essential for its translational repressor activity; that stretch reads FDSWSDYLGLSSLISRG. A disordered region spans residues 23–56; it reads GLQPRGEGENPSPRWNVSCPAPAEPLPSKEPEGR. The Nanos-type zinc-finger motif lies at 60–114; it reads GCGFCRSNKEAMSLYSSHRLRSLDGRVLCPVLRGYTCPLCGANGDWAHTMRYCPL. Zn(2+)-binding residues include Cys-61, Cys-64, His-77, Cys-88, Cys-96, Cys-99, His-107, and Cys-112. Short sequence motifs (C2HC) lie at residues 61–88 and 96–112; these read CGFC…RVLC and CPLC…MRYC.

It belongs to the nanos family. Interacts with ccnb1.

Its subcellular location is the cytoplasm. The protein resides in the perinuclear region. In terms of biological role, acts as a translational repressor. Can mediate repression affecting different steps in the translation process: cap-driven, IRES-driven, polyadenylated RNAs or nonpolyadenylated RNAs. Essential for the development of primordial germ cells (PGCs) by ensuring their proper migration and survival. In Xenopus borealis (Kenyan clawed frog), this protein is Nanos homolog 1 (nanos1).